We begin with the raw amino-acid sequence, 545 residues long: Glucose-6-phosphate isomerase (545 aa).

The Proton donor role is filled by Glu351. Catalysis depends on residues His382 and Lys510.

Belongs to the GPI family.

It localises to the cytoplasm. The enzyme catalyses alpha-D-glucose 6-phosphate = beta-D-fructose 6-phosphate. Its pathway is carbohydrate biosynthesis; gluconeogenesis. The protein operates within carbohydrate degradation; glycolysis; D-glyceraldehyde 3-phosphate and glycerone phosphate from D-glucose: step 2/4. Catalyzes the reversible isomerization of glucose-6-phosphate to fructose-6-phosphate. In Helicobacter pylori (strain Shi470), this protein is Glucose-6-phosphate isomerase.